Here is a 176-residue protein sequence, read N- to C-terminus: Ribosome rescue factor SmrB (176 aa).

The 76-residue stretch at 97 to 172 (LDMHGMTQQE…GDGALLVLLS (76 aa)) folds into the Smr domain.

It belongs to the SmrB family. Associates with collided ribosomes, but not with correctly translating polysomes.

In terms of biological role, acts as a ribosome collision sensor. Detects stalled/collided disomes (pairs of ribosomes where the leading ribosome is stalled and a second ribosome has collided with it) and endonucleolytically cleaves mRNA at the 5' boundary of the stalled ribosome. Stalled/collided disomes form a new interface (primarily via the 30S subunits) that binds SmrB. Cleaved mRNA becomes available for tmRNA ligation, leading to ribosomal subunit dissociation and rescue of stalled ribosomes. This Vibrio vulnificus (strain CMCP6) protein is Ribosome rescue factor SmrB.